Reading from the N-terminus, the 244-residue chain is 7-cyano-7-deazaguanine synthase (244 aa).

ATP is bound at residue 14–24 (FSGGQDSATCV). Residues Cys-202, Cys-217, Cys-220, and Cys-223 each contribute to the Zn(2+) site.

It belongs to the QueC family. Zn(2+) serves as cofactor.

The enzyme catalyses 7-carboxy-7-deazaguanine + NH4(+) + ATP = 7-cyano-7-deazaguanine + ADP + phosphate + H2O + H(+). It participates in purine metabolism; 7-cyano-7-deazaguanine biosynthesis. Its function is as follows. Catalyzes the ATP-dependent conversion of 7-carboxy-7-deazaguanine (CDG) to 7-cyano-7-deazaguanine (preQ(0)). In Burkholderia cenocepacia (strain HI2424), this protein is 7-cyano-7-deazaguanine synthase.